Reading from the N-terminus, the 248-residue chain is DNA repair protein RecO (248 aa).

The protein belongs to the RecO family.

In terms of biological role, involved in DNA repair and RecF pathway recombination. This chain is DNA repair protein RecO, found in Bradyrhizobium sp. (strain ORS 278).